A 126-amino-acid polypeptide reads, in one-letter code: Holo-[acyl-carrier-protein] synthase (126 aa).

The Mg(2+) site is built by D9 and E58.

The protein belongs to the P-Pant transferase superfamily. AcpS family. It depends on Mg(2+) as a cofactor.

It localises to the cytoplasm. The catalysed reaction is apo-[ACP] + CoA = holo-[ACP] + adenosine 3',5'-bisphosphate + H(+). In terms of biological role, transfers the 4'-phosphopantetheine moiety from coenzyme A to a Ser of acyl-carrier-protein. The chain is Holo-[acyl-carrier-protein] synthase from Escherichia coli (strain K12 / MC4100 / BW2952).